Consider the following 155-residue polypeptide: Ribosomal RNA large subunit methyltransferase H (155 aa).

S-adenosyl-L-methionine contacts are provided by residues Gly104 and Leu123–Leu128.

This sequence belongs to the RNA methyltransferase RlmH family. As to quaternary structure, homodimer.

It is found in the cytoplasm. It carries out the reaction pseudouridine(1915) in 23S rRNA + S-adenosyl-L-methionine = N(3)-methylpseudouridine(1915) in 23S rRNA + S-adenosyl-L-homocysteine + H(+). Specifically methylates the pseudouridine at position 1915 (m3Psi1915) in 23S rRNA. This Marinomonas sp. (strain MWYL1) protein is Ribosomal RNA large subunit methyltransferase H.